Reading from the N-terminus, the 49-residue chain is Large ribosomal subunit protein bL32 (49 aa).

Belongs to the bacterial ribosomal protein bL32 family.

This chain is Large ribosomal subunit protein bL32, found in Nautilia profundicola (strain ATCC BAA-1463 / DSM 18972 / AmH).